The chain runs to 247 residues: DNA polymerase sliding clamp (247 aa).

Belongs to the PCNA family. As to quaternary structure, homotrimer. The subunits circularize to form a toroid; DNA passes through its center. Replication factor C (RFC) is required to load the toroid on the DNA.

Its function is as follows. Sliding clamp subunit that acts as a moving platform for DNA processing. Responsible for tethering the catalytic subunit of DNA polymerase and other proteins to DNA during high-speed replication. In Thermofilum pendens (strain DSM 2475 / Hrk 5), this protein is DNA polymerase sliding clamp.